The chain runs to 289 residues: uncharacterized protein (289 aa).

The segment at 268–289 (SDDGYETQWSDGPYSIPSGLSD) is disordered.

This is an uncharacterized protein from Zea mays (Maize).